A 266-amino-acid chain; its full sequence is Translation initiation factor 2 subunit alpha (266 aa).

The region spanning 12–83 (GEILIATVKQ…RKGTVDVSLK (72 aa)) is the S1 motif domain.

This sequence belongs to the eIF-2-alpha family. Heterotrimer composed of an alpha, a beta and a gamma chain.

EIF-2 functions in the early steps of protein synthesis by forming a ternary complex with GTP and initiator tRNA. In Saccharolobus solfataricus (strain ATCC 35092 / DSM 1617 / JCM 11322 / P2) (Sulfolobus solfataricus), this protein is Translation initiation factor 2 subunit alpha.